The following is a 142-amino-acid chain: Large ribosomal subunit protein uL11 (142 aa).

The protein belongs to the universal ribosomal protein uL11 family. As to quaternary structure, part of the ribosomal stalk of the 50S ribosomal subunit. Interacts with L10 and the large rRNA to form the base of the stalk. L10 forms an elongated spine to which L12 dimers bind in a sequential fashion forming a multimeric L10(L12)X complex. Post-translationally, one or more lysine residues are methylated.

Forms part of the ribosomal stalk which helps the ribosome interact with GTP-bound translation factors. The protein is Large ribosomal subunit protein uL11 of Leptospira borgpetersenii serovar Hardjo-bovis (strain JB197).